A 257-amino-acid chain; its full sequence is Myosin-8 (257 aa).

The stretch at 1–257 (RAALQAEIEE…REVHTKISAE (257 aa)) forms a coiled coil. Residues Ser33, Ser45, and Ser58 each carry the phosphoserine modification.

As to quaternary structure, muscle myosin is a hexameric protein that consists of 2 heavy chain subunits (MHC), 2 alkali light chain subunits (MLC) and 2 regulatory light chain subunits (MLC-2).

The protein localises to the cytoplasm. It is found in the myofibril. Functionally, muscle contraction. This chain is Myosin-8 (Myh8), found in Rattus norvegicus (Rat).